The sequence spans 199 residues: Glycerol-3-phosphate acyltransferase (199 aa).

5 helical membrane-spanning segments follow: residues 3 to 23, 50 to 70, 78 to 98, 113 to 133, and 154 to 174; these read AAVW…GVLV, WGPA…AVLV, DWML…SVFL, LLFL…SVIL, and LALG…LLIF.

It belongs to the PlsY family. Probably interacts with PlsX.

The protein localises to the cell inner membrane. It catalyses the reaction an acyl phosphate + sn-glycerol 3-phosphate = a 1-acyl-sn-glycero-3-phosphate + phosphate. Its pathway is lipid metabolism; phospholipid metabolism. Its function is as follows. Catalyzes the transfer of an acyl group from acyl-phosphate (acyl-PO(4)) to glycerol-3-phosphate (G3P) to form lysophosphatidic acid (LPA). This enzyme utilizes acyl-phosphate as fatty acyl donor, but not acyl-CoA or acyl-ACP. The chain is Glycerol-3-phosphate acyltransferase from Thermus thermophilus (strain ATCC 27634 / DSM 579 / HB8).